The chain runs to 411 residues: MGKNDFLTPKAIANRIKAKGLQKLRWYCQMCQKQCRDENGFKCHCMSESHQRQMQVFGQNPTRVVDGYSEEFEQTFLDLMRRSHRFSRIAATVVYNEYINDRHHVHMNSTEWATLTEFIKHLGKTGKCKVEETPKGWFITYIDRDSETLFKERLKNKRVKSDLAEEEKQEREIQRQIERAAEKLNGGGGEGETSGNDEVVDDGDDERKKDEDLRLKSGVKVGFALGGGVKQVATGKERGESSKLLFGDEENDKVERGEKRKRSGDSGRSEKERRSALDELMKEEEKKKERMNRKDYWLFEGIIVKVMSKALAEKGYYKQKGVVKKVIDNYVGEIKMLDSKHVLRVDQKELETVLPQIGGMVKIVNGAYRGSNARLLGVDTEKFCAKVQIEKGVYDGRVIKSIEYEDICKLA.

A C2H2-type zinc finger spans residues 28 to 50; that stretch reads CQMCQKQCRDENGFKCHCMSESH. Positions 51–160 are winged helix-turn-helix (wHTH); sequence QRQMQVFGQN…KERLKNKRVK (110 aa). The stretch at 147–183 forms a coiled coil; the sequence is ETLFKERLKNKRVKSDLAEEEKQEREIQRQIERAAEK. Disordered stretches follow at residues 182–211 and 232–286; these read EKLN…KKDE and VATG…EEEK. A compositionally biased stretch (basic and acidic residues) spans 253-286; the sequence is KVERGEKRKRSGDSGRSEKERRSALDELMKEEEK. The Nuclear localization signal (NLS) motif lies at 259-262; the sequence is KRKR. Residues 265–294 are a coiled coil; the sequence is DSGRSEKERRSALDELMKEEEKKKERMNRK. Positions 301 to 352 are C-terminal subdomain A; that stretch reads GIIVKVMSKALAEKGYYKQKGVVKKVIDNYVGEIKMLDSKHVLRVDQKELET. A C-terminal subdomain B region spans residues 358–409; the sequence is GGMVKIVNGAYRGSNARLLGVDTEKFCAKVQIEKGVYDGRVIKSIEYEDICK.

Belongs to the KIN17 family. Interacts with SPL7. As to expression, expressed in root vasculature, lateral roots, cotyledons, rosette leaves, cauline leaves, stems, sepals, style of pistils, mature pollen grains and siliques.

The protein resides in the nucleus speckle. Its function is as follows. Promotes the copper deficiency response by direct interaction with SPL7. Acts with SPL7 in a common pathway to promote copper-responsive genes and alleviate oxidative stress during copper-limiting periods. May promote SPL7 function when copper is limiting. Participates in the control of general plant growth and development, and in the response to counteract the negative effects of UV radiation. The polypeptide is KIN17-like protein (Arabidopsis thaliana (Mouse-ear cress)).